The chain runs to 304 residues: Type II restriction enzyme LlaDCHI (304 aa).

The protein belongs to the DpnII type II restriction endonuclease family.

It carries out the reaction Endonucleolytic cleavage of DNA to give specific double-stranded fragments with terminal 5'-phosphates.. Its function is as follows. A P subtype restriction enzyme that recognizes the double-stranded unmethylated sequence 5'-GATC-3' and cleaves before G-1. This Lactococcus lactis subsp. cremoris (Streptococcus cremoris) protein is Type II restriction enzyme LlaDCHI (llaDCHIR).